Reading from the N-terminus, the 313-residue chain is Ornithine carbamoyltransferase (313 aa).

Carbamoyl phosphate-binding positions include 61–64 (STRT), glutamine 88, arginine 112, and 139–142 (HPCQ). L-ornithine is bound by residues asparagine 170, aspartate 228, and 232 to 233 (SM). Residues 268 to 269 (CL) and arginine 296 contribute to the carbamoyl phosphate site.

Belongs to the aspartate/ornithine carbamoyltransferase superfamily. OTCase family.

The protein localises to the cytoplasm. It carries out the reaction carbamoyl phosphate + L-ornithine = L-citrulline + phosphate + H(+). It functions in the pathway amino-acid biosynthesis; L-arginine biosynthesis; L-arginine from L-ornithine and carbamoyl phosphate: step 1/3. Functionally, reversibly catalyzes the transfer of the carbamoyl group from carbamoyl phosphate (CP) to the N(epsilon) atom of ornithine (ORN) to produce L-citrulline. This is Ornithine carbamoyltransferase from Bordetella parapertussis (strain 12822 / ATCC BAA-587 / NCTC 13253).